Consider the following 215-residue polypeptide: MGCYSMGFVGRKAGMSRVFLEDGRSIPVTLIEATANRVVQIKTSDVDGYDAIQVTVGSRRSVLVNKPESGHFAKAKVEAGRGLWEFRVEKTQLGSYSVGSEVGLSIFAVGQKVDIQGITKGKGFQGTIKRHNFRMGDATHGNSLSHRAPGSLGQRQTPGRVFPGKKMSGHMGAVRQSVQNLEVIKIDVERFLIAVRGAIPGASGGDVLIRSASKI.

Residue glutamine 156 is modified to N5-methylglutamine.

The protein belongs to the universal ribosomal protein uL3 family. Part of the 50S ribosomal subunit. Forms a cluster with proteins L14 and L19. Post-translationally, methylated by PrmB.

Functionally, one of the primary rRNA binding proteins, it binds directly near the 3'-end of the 23S rRNA, where it nucleates assembly of the 50S subunit. The polypeptide is Large ribosomal subunit protein uL3 (Xylella fastidiosa (strain M12)).